Reading from the N-terminus, the 382-residue chain is Na(+)/H(+) antiporter NhaA 2 (382 aa).

The next 12 helical transmembrane spans lie at 7-27, 28-48, 52-72, 88-108, 118-138, 147-167, 170-190, 206-226, 254-274, 285-305, 325-345, and 356-376; these read AGGVLLIAASILALIFANSYL, SGFYNGVLNLPLVVAIGAFEI, LLLWVNDGLMALFFLMVGLEV, VLPGLAALAGVAFPAIIYASF, GWAIPSATDIAFALGVFSLFG, LFLLSVAIFDDIAAIVIIALF, HELSTLSLLVAGIGIVMLFVL, LVVWAAVLKSGVHATLAGFVI, VAYFILPFFAFVNAGVHLGGI, LGIIVGLFVGKQLGIFSVCWL, GVCLLAGIGFTMSLFIGSLAF, and VKLGVLFGSLLSAICGALILT.

The protein belongs to the NhaA Na(+)/H(+) (TC 2.A.33) antiporter family.

Its subcellular location is the cell inner membrane. It carries out the reaction Na(+)(in) + 2 H(+)(out) = Na(+)(out) + 2 H(+)(in). Its function is as follows. Na(+)/H(+) antiporter that extrudes sodium in exchange for external protons. This is Na(+)/H(+) antiporter NhaA 2 from Saccharophagus degradans (strain 2-40 / ATCC 43961 / DSM 17024).